The sequence spans 224 residues: uncharacterized protein (224 aa).

The 68-residue stretch at 10–77 folds into the HTH gntR-type domain; that stretch reads TPYYLQFYNQ…DRNGFSITSL (68 aa). Positions 37–56 form a DNA-binding region, H-T-H motif; the sequence is ETQLAKSFGVSRSPIREAMR.

This is an uncharacterized protein from Bacillus subtilis (strain 168).